Consider the following 298-residue polypeptide: Bifunctional protein FolD (298 aa).

Residues 165-167 (GRS), Ser-190, and Ile-231 contribute to the NADP(+) site.

It belongs to the tetrahydrofolate dehydrogenase/cyclohydrolase family. As to quaternary structure, homodimer.

The catalysed reaction is (6R)-5,10-methylene-5,6,7,8-tetrahydrofolate + NADP(+) = (6R)-5,10-methenyltetrahydrofolate + NADPH. The enzyme catalyses (6R)-5,10-methenyltetrahydrofolate + H2O = (6R)-10-formyltetrahydrofolate + H(+). The protein operates within one-carbon metabolism; tetrahydrofolate interconversion. Catalyzes the oxidation of 5,10-methylenetetrahydrofolate to 5,10-methenyltetrahydrofolate and then the hydrolysis of 5,10-methenyltetrahydrofolate to 10-formyltetrahydrofolate. This is Bifunctional protein FolD from Prochlorococcus marinus subsp. pastoris (strain CCMP1986 / NIES-2087 / MED4).